Reading from the N-terminus, the 175-residue chain is RNA pyrophosphohydrolase (175 aa).

Residues 8 to 159 enclose the Nudix hydrolase domain; it reads PYRTCVGMML…KRPVYERVVK (152 aa). The Nudix box motif lies at 47 to 68; sequence GGVDPGEDPWTAAKRELYEETS.

The protein belongs to the Nudix hydrolase family. RppH subfamily. It depends on a divalent metal cation as a cofactor.

Accelerates the degradation of transcripts by removing pyrophosphate from the 5'-end of triphosphorylated RNA, leading to a more labile monophosphorylated state that can stimulate subsequent ribonuclease cleavage. The chain is RNA pyrophosphohydrolase from Rhodopseudomonas palustris (strain BisB18).